Consider the following 566-residue polypeptide: Serine/threonine-protein kinase haspin homolog (566 aa).

The Protein kinase domain occupies 248-566 (LLNTKKIGEG…HCANYLFNLN (319 aa)). ATP-binding positions include 254–262 (IGEGAYGEV), Lys282, 377–382 (KFAGSD), 418–423 (DLHLGN), and 456–458 (DYT). Asp418 acts as the Proton acceptor in catalysis.

This sequence belongs to the protein kinase superfamily. Ser/Thr protein kinase family. Haspin subfamily. As to quaternary structure, interacts with pds5 and vtd. The cofactor is Mg(2+).

It is found in the nucleus lamina. Its subcellular location is the chromosome. The protein localises to the cytoplasm. The protein resides in the cytoskeleton. It localises to the spindle. It catalyses the reaction L-seryl-[protein] + ATP = O-phospho-L-seryl-[protein] + ADP + H(+). It carries out the reaction L-threonyl-[protein] + ATP = O-phospho-L-threonyl-[protein] + ADP + H(+). Functionally, serine/threonine-protein kinase that phosphorylates histone H3 at 'Thr-4' (H3T3ph) during mitosis and interphase. Function is essential for chromosome organization during mitosis and genome organization in interphase cells, thus playing a functional role in gene regulation. During mitosis, may act through H3T3ph to both position and modulate activation of AURKB and other components of the chromosomal passenger complex (CPC) at centromeres to ensure proper chromatid cohesion, metaphase alignment and normal progression through the cell cycle. During interphase, associates with the cohesion complex and mediates pds5 binding to chromatin to ensure correct sister chromatid cohesion, chromatin organization, and also functions with Pds5-cohesin to modify Polycomb-dependent homeotic transformations. Function during interphase is required for insulator activity, nuclear compaction, heterochromatin-induced position-effect variegation and PcG-mediated pairing-sensitive silencing. In Drosophila melanogaster (Fruit fly), this protein is Serine/threonine-protein kinase haspin homolog.